The sequence spans 67 residues: DNA-directed RNA polymerase subunit omega (67 aa).

Belongs to the RNA polymerase subunit omega family. The RNAP catalytic core consists of 2 alpha, 1 beta, 1 beta' and 1 omega subunit. When a sigma factor is associated with the core the holoenzyme is formed, which can initiate transcription.

It catalyses the reaction RNA(n) + a ribonucleoside 5'-triphosphate = RNA(n+1) + diphosphate. Functionally, promotes RNA polymerase assembly. Latches the N- and C-terminal regions of the beta' subunit thereby facilitating its interaction with the beta and alpha subunits. In Methylibium petroleiphilum (strain ATCC BAA-1232 / LMG 22953 / PM1), this protein is DNA-directed RNA polymerase subunit omega.